The following is a 398-amino-acid chain: GTP cyclohydrolase-2 (398 aa).

Residues 1–172 form a unknown region; sequence MNTPTHTHPH…TAAACASTTE (172 aa). A GTP cyclohydrolase II region spans residues 173–398; sequence YELVTRTPVP…VKPIAKTGHA (226 aa). 220–224 is a GTP binding site; sequence RVHSS. Residues Cys-225, Cys-236, and Cys-238 each contribute to the Zn(2+) site. GTP-binding positions include Gln-241, 263–265, and Thr-285; that span reads EGR. Asp-297 functions as the Proton acceptor in the catalytic mechanism. Arg-299 serves as the catalytic Nucleophile. Positions 320 and 325 each coordinate GTP. Positions 375–398 are disordered; that stretch reads QRPQDPSETVDGETVKPIAKTGHA.

The protein in the C-terminal section; belongs to the GTP cyclohydrolase II family. It depends on Zn(2+) as a cofactor.

The enzyme catalyses GTP + 4 H2O = 2,5-diamino-6-hydroxy-4-(5-phosphoribosylamino)-pyrimidine + formate + 2 phosphate + 3 H(+). The protein operates within cofactor biosynthesis; riboflavin biosynthesis; 5-amino-6-(D-ribitylamino)uracil from GTP: step 1/4. Its function is as follows. Catalyzes the conversion of GTP to 2,5-diamino-6-ribosylamino-4(3H)-pyrimidinone 5'-phosphate (DARP), formate and pyrophosphate. The chain is GTP cyclohydrolase-2 (ribA) from Xylella fastidiosa (strain Temecula1 / ATCC 700964).